The sequence spans 233 residues: Large ribosomal subunit protein uL1 (233 aa).

The protein belongs to the universal ribosomal protein uL1 family. In terms of assembly, part of the 50S ribosomal subunit.

In terms of biological role, binds directly to 23S rRNA. The L1 stalk is quite mobile in the ribosome, and is involved in E site tRNA release. Functionally, protein L1 is also a translational repressor protein, it controls the translation of the L11 operon by binding to its mRNA. The chain is Large ribosomal subunit protein uL1 from Laribacter hongkongensis (strain HLHK9).